A 966-amino-acid chain; its full sequence is Leucine--tRNA ligase (966 aa).

The 'HIGH' region signature appears at 41–51; the sequence is PYLNGNLHAGH. Residues 632–636 carry the 'KMSKS' region motif; the sequence is KMSKS. ATP is bound at residue Lys-635.

The protein belongs to the class-I aminoacyl-tRNA synthetase family.

It localises to the cytoplasm. It catalyses the reaction tRNA(Leu) + L-leucine + ATP = L-leucyl-tRNA(Leu) + AMP + diphosphate. The chain is Leucine--tRNA ligase from Methanosarcina barkeri (strain Fusaro / DSM 804).